The primary structure comprises 326 residues: Adenosine receptor A1 (326 aa).

Residues 1 to 10 are Extracellular-facing; that stretch reads MPPYISAFQA. A helical transmembrane segment spans residues 11 to 33; the sequence is AYIGIEVLIALVSVPGNVLVIWA. Over 34–46 the chain is Cytoplasmic; the sequence is VKVNQALRDATFC. A helical transmembrane segment spans residues 47 to 69; sequence FIVSLAVADVAVGALVIPLAILI. The Extracellular portion of the chain corresponds to 70–80; that stretch reads NIGPQTYFHTC. Residues C80 and C169 are joined by a disulfide bond. The chain crosses the membrane as a helical span at residues 81–102; the sequence is LMVACPVLILTQSSILALLAIA. Residues 103–123 are Cytoplasmic-facing; that stretch reads VDRYLRVKIPLRYKTVVTQRR. A helical transmembrane segment spans residues 124–146; the sequence is AAVAIAGCWILSLVVGLTPMFGW. Residues 147 to 176 lie on the Extracellular side of the membrane; sequence NNLSEVEQAWIANGSVGEPVIKCEFEKVIS. N-linked (GlcNAc...) asparagine glycosylation is found at N148 and N159. A helical membrane pass occupies residues 177-201; the sequence is MEYMVYFNFFVWVLPPLLLMVLIYL. Residues 202 to 235 are Cytoplasmic-facing; the sequence is EVFYLIRKQLNKKVSASSGDPQKYYGKELKIAKS. A helical transmembrane segment spans residues 236–259; that stretch reads LALILFLFALSWLPLHILNCITLF. Residues 260–267 lie on the Extracellular side of the membrane; the sequence is CPTCQKPS. Residues 268–292 form a helical membrane-spanning segment; it reads ILIYIAIFLTHGNSAMNPIVYAFRI. The Cytoplasmic segment spans residues 293 to 326; the sequence is HKFRVTFLKIWNDHFRCQPKPPIEEDIPEEKADD. C309 carries S-palmitoyl cysteine lipidation.

Belongs to the G-protein coupled receptor 1 family.

It localises to the cell membrane. In terms of biological role, receptor for adenosine. The activity of this receptor is mediated by G proteins which inhibit adenylyl cyclase. The protein is Adenosine receptor A1 (Adora1) of Mus musculus (Mouse).